Consider the following 406-residue polypeptide: Putative phosphate permease PH0640 (406 aa).

The next 11 helical transmembrane spans lie at 2–22 (IPID…AWAI), 45–65 (AVLI…KTVT), 83–103 (VLIY…IIAT), 114–134 (SIIG…IVNW), 140–160 (VVLS…LVFR), 182–202 (FWIG…VLHG), 207–227 (IGIL…TSML), 265–285 (VANA…GLAG), 288–308 (VPVP…GVAT), 330–350 (FTID…GMPI), and 385–405 (FVTV…LLLI).

This sequence belongs to the inorganic phosphate transporter (PiT) (TC 2.A.20) family.

It is found in the cell membrane. Functionally, potential transporter for phosphate. The chain is Putative phosphate permease PH0640 from Pyrococcus horikoshii (strain ATCC 700860 / DSM 12428 / JCM 9974 / NBRC 100139 / OT-3).